A 408-amino-acid chain; its full sequence is DNA primase DnaG (408 aa).

In terms of domain architecture, Toprim spans 172–248 (DSIIIVEGRA…HVDYIARAPP (77 aa)). Glutamate 178, aspartate 222, and aspartate 224 together coordinate Mg(2+). A disordered region spans residues 279 to 304 (AAGEKAETPQQPPPQQPVPQQEVREE).

The protein belongs to the archaeal DnaG primase family. As to quaternary structure, forms a ternary complex with MCM helicase and DNA. Component of the archaeal exosome complex. The cofactor is Mg(2+).

It carries out the reaction ssDNA + n NTP = ssDNA/pppN(pN)n-1 hybrid + (n-1) diphosphate.. In terms of biological role, RNA polymerase that catalyzes the synthesis of short RNA molecules used as primers for DNA polymerase during DNA replication. Also part of the exosome, which is a complex involved in RNA degradation. Acts as a poly(A)-binding protein that enhances the interaction between heteromeric, adenine-rich transcripts and the exosome. This chain is DNA primase DnaG, found in Pyrobaculum aerophilum (strain ATCC 51768 / DSM 7523 / JCM 9630 / CIP 104966 / NBRC 100827 / IM2).